A 448-amino-acid polypeptide reads, in one-letter code: Phosphoglucosamine mutase (448 aa).

The active-site Phosphoserine intermediate is serine 102. Residues serine 102, aspartate 242, aspartate 244, and aspartate 246 each coordinate Mg(2+). A Phosphoserine modification is found at serine 102.

This sequence belongs to the phosphohexose mutase family. It depends on Mg(2+) as a cofactor. Post-translationally, activated by phosphorylation.

It catalyses the reaction alpha-D-glucosamine 1-phosphate = D-glucosamine 6-phosphate. In terms of biological role, catalyzes the conversion of glucosamine-6-phosphate to glucosamine-1-phosphate. The sequence is that of Phosphoglucosamine mutase from Brevibacillus brevis (strain 47 / JCM 6285 / NBRC 100599).